A 185-amino-acid polypeptide reads, in one-letter code: Ribosome-recycling factor (185 aa).

Belongs to the RRF family.

It is found in the cytoplasm. Functionally, responsible for the release of ribosomes from messenger RNA at the termination of protein biosynthesis. May increase the efficiency of translation by recycling ribosomes from one round of translation to another. The protein is Ribosome-recycling factor of Nocardioides sp. (strain ATCC BAA-499 / JS614).